We begin with the raw amino-acid sequence, 156 residues long: Protein BUNDLE SHEATH DEFECTIVE 2, chloroplastic (156 aa).

The N-terminal 41 residues, 1–41, are a transit peptide targeting the chloroplast; the sequence is MNSAALNARTASVAPQPQACHACKCRQLLSRRVPPAQRQVE. Zn(2+)-binding residues include Cys-78, Cys-81, Cys-89, Cys-92, Cys-133, Cys-136, Cys-144, and Cys-147.

This sequence belongs to the BSD2 chaperone family. Interacts with the RuBisCo large subunit (RbcL) assembled as an intermediate complex made of eight RbcL and eight BSD2 subunits.

The protein localises to the plastid. It is found in the chloroplast stroma. Its function is as follows. Chloroplast chaperone required for RuBisCo biogenesis and translational regulation of the RuBisCo large subunit (RbcL). Stabilizes an end-state assembly intermediate of eight RbcL subunits until the small subunits (RBCSs) become available to produce a complete stable RuBisCo complex containing eight small and eight large subunits. This chain is Protein BUNDLE SHEATH DEFECTIVE 2, chloroplastic, found in Chlamydomonas reinhardtii (Chlamydomonas smithii).